A 161-amino-acid polypeptide reads, in one-letter code: uncharacterized protein (161 aa).

4 consecutive transmembrane segments (helical) span residues 22–42 (LFFINVGLAAVAMLVAGVFGH), 43–63 (LTVGMFLGLGLLLGLLNALLV), 89–109 (LAIITILGLIIAYIFRPAGLG), and 110–130 (VVFGLAFFQVLLVATTALPVL). Residues 141–161 (VATYSSNGQTGGSEGRSASDD) form a disordered region.

The protein to M.leprae ML1138.

Its subcellular location is the cell membrane. This is an uncharacterized protein from Mycobacterium bovis (strain ATCC BAA-935 / AF2122/97).